The following is a 377-amino-acid chain: Dihydroorotate dehydrogenase (quinone) (377 aa).

FMN contacts are provided by residues 82–86 (AGFDK) and Thr-106. Lys-86 is a binding site for substrate. 131–135 (NRMGF) contributes to the substrate binding site. Residues Asn-159 and Asn-192 each coordinate FMN. Position 192 (Asn-192) interacts with substrate. Ser-195 (nucleophile) is an active-site residue. Substrate is bound at residue Asn-197. FMN is bound by residues Lys-228 and Thr-256. A substrate-binding site is contributed by 257–258 (NT). FMN contacts are provided by residues Gly-282, Gly-311, and 332 to 333 (YT).

This sequence belongs to the dihydroorotate dehydrogenase family. Type 2 subfamily. In terms of assembly, monomer. The cofactor is FMN.

The protein resides in the cell membrane. It catalyses the reaction (S)-dihydroorotate + a quinone = orotate + a quinol. It participates in pyrimidine metabolism; UMP biosynthesis via de novo pathway; orotate from (S)-dihydroorotate (quinone route): step 1/1. In terms of biological role, catalyzes the conversion of dihydroorotate to orotate with quinone as electron acceptor. The polypeptide is Dihydroorotate dehydrogenase (quinone) (Corynebacterium efficiens (strain DSM 44549 / YS-314 / AJ 12310 / JCM 11189 / NBRC 100395)).